Reading from the N-terminus, the 1097-residue chain is DNA-directed RNA polymerase subunit beta (1097 aa).

The segment at 1072–1097 (QDVNPRRSTPSRPTYESLGVADYDED) is disordered.

It belongs to the RNA polymerase beta chain family. In terms of assembly, in cyanobacteria the RNAP catalytic core is composed of 2 alpha, 1 beta, 1 beta', 1 gamma and 1 omega subunit. When a sigma factor is associated with the core the holoenzyme is formed, which can initiate transcription.

It carries out the reaction RNA(n) + a ribonucleoside 5'-triphosphate = RNA(n+1) + diphosphate. In terms of biological role, DNA-dependent RNA polymerase catalyzes the transcription of DNA into RNA using the four ribonucleoside triphosphates as substrates. The sequence is that of DNA-directed RNA polymerase subunit beta from Synechococcus sp. (strain WH7803).